Reading from the N-terminus, the 440-residue chain is 2-alpha-hydroxytaxane 2-O-benzoyltransferase (440 aa).

Catalysis depends on proton acceptor residues His158 and Asp367.

This sequence belongs to the plant acyltransferase family.

The enzyme catalyses 10-deacetyl-2-debenzoylbaccatin III + benzoyl-CoA = 10-deacetylbaccatin III + CoA. The protein operates within alkaloid biosynthesis; taxol biosynthesis; baccatin III from 10-deacetyl-2-debenzoylbaccatin III: step 1/2. Its function is as follows. Catalyzes the conversion of 2-debenzoyl-7,13-diacetylbaccatin III, a semisynthetic substrate, to 7,13-diacetylbaccatin III. The chain is 2-alpha-hydroxytaxane 2-O-benzoyltransferase from Taxus cuspidata (Japanese yew).